A 450-amino-acid polypeptide reads, in one-letter code: Benzene 1,2-dioxygenase subunit alpha (450 aa).

Residues 54–163 (WLLLGHETQI…VETYKGLIFA (110 aa)) form the Rieske domain. [2Fe-2S] cluster contacts are provided by Cys-96, His-98, Cys-116, and His-119. Residues His-222 and His-228 each contribute to the Fe cation site.

Belongs to the bacterial ring-hydroxylating dioxygenase alpha subunit family. This dioxygenase system consists of four proteins: the two subunits of the hydroxylase component (BnzA and BnzB), a ferredoxin (BnzC) and a ferredoxin reductase (BnzD). It depends on [2Fe-2S] cluster as a cofactor. Requires Fe cation as cofactor.

It catalyses the reaction benzene + NADH + O2 + H(+) = cis-1,2-dihydrobenzene-1,2-diol + NAD(+). It carries out the reaction toluene + NADH + O2 + H(+) = (1S,2R)-3-methylcyclohexa-3,5-diene-1,2-diol + NAD(+). It participates in aromatic compound metabolism; benzene degradation; catechol from benzene: step 1/2. The protein operates within xenobiotic degradation; toluene degradation. It functions in the pathway xenobiotic degradation; xylene degradation. Its function is as follows. Catalyzes both the oxidation of benzene and toluene. The polypeptide is Benzene 1,2-dioxygenase subunit alpha (bnzA) (Pseudomonas putida (strain ATCC 700007 / DSM 6899 / JCM 31910 / BCRC 17059 / LMG 24140 / F1)).